A 420-amino-acid chain; its full sequence is MKFTNLTAKEFGAFTDSMPYSHFTQTVGHYELKLAEGYETHLVGIKNNNNEVIAACLLTAVPVMKVFKYFYSNRGPVIDYENQELVHFFFNELSKYVKKHRCLYLHIDPYLPYQYLNHDGEITGNAGNDWFFDKMSNLGFEHTGFHKGFDPVLQIRYHSVLDLKDKTADDIIKNMDGLRKRNTKKVKKNGVKVRYLSEEELPIFRSFMEDTSESKAFADRDDKFYYNRLKYYKDRVLVPLAYINFDEYIKELNEERDILNKDLNKALKDIEKRPENKKAHNKRDNLQQQLDANEQKIEEGKRLQEEHGNELPISAGFFFINPFEVVYYAGGTSNAFRHFAGSYAVQWEMINYALNHGIDRYNFYGVSGKFTEDAEDAGVVKFKKGYNAEIIEYVGDFIKPINKPVYAAYTALKKVKDRIF.

It belongs to the FemABX family. Homodimer. Interacts with FemB.

Its subcellular location is the cytoplasm. It catalyses the reaction beta-D-GlcNAc-(1-&gt;4)-Mur2Ac(oyl-L-Ala-D-isoglutaminyl-L-Lys-(N(6)-Gly)-D-Ala-D-Ala)-di-trans,octa-cis-undecaprenyl diphosphate + 2 glycyl-tRNA(Gly) = MurNAc-L-Ala-D-isoglutaminyl-L-Lys-(N(6)-tri-Gly)-D-Ala-D-Ala-diphospho-di-trans,octa-cis-undecaprenyl-GlcNAc + 2 tRNA(Gly) + 2 H(+). Catalyzes the formation of the pentaglycine interpeptide bridge, which is characteristic of the S.aureus peptidoglycan. Adds glycines 2 and 3 of the pentaglycine bridge, using glycyl-tRNA(Gly) as donor. Involved in resistance to methicillin. This Staphylococcus aureus (strain Mu50 / ATCC 700699) protein is Aminoacyltransferase FemA (femA).